Reading from the N-terminus, the 337-residue chain is tRNA N6-adenosine threonylcarbamoyltransferase (337 aa).

Fe cation is bound by residues His-111 and His-115. Substrate is bound by residues 134 to 138, Asp-167, Gly-180, and Asn-272; that span reads LVSGG. Asp-300 serves as a coordination point for Fe cation.

This sequence belongs to the KAE1 / TsaD family. Fe(2+) is required as a cofactor.

The protein localises to the cytoplasm. It catalyses the reaction L-threonylcarbamoyladenylate + adenosine(37) in tRNA = N(6)-L-threonylcarbamoyladenosine(37) in tRNA + AMP + H(+). Required for the formation of a threonylcarbamoyl group on adenosine at position 37 (t(6)A37) in tRNAs that read codons beginning with adenine. Is involved in the transfer of the threonylcarbamoyl moiety of threonylcarbamoyl-AMP (TC-AMP) to the N6 group of A37, together with TsaE and TsaB. TsaD likely plays a direct catalytic role in this reaction. This is tRNA N6-adenosine threonylcarbamoyltransferase from Shewanella sediminis (strain HAW-EB3).